The sequence spans 190 residues: Putative 3-methyladenine DNA glycosylase (190 aa).

It belongs to the DNA glycosylase MPG family.

In Corynebacterium efficiens (strain DSM 44549 / YS-314 / AJ 12310 / JCM 11189 / NBRC 100395), this protein is Putative 3-methyladenine DNA glycosylase.